The chain runs to 316 residues: Zinc finger protein 330 (316 aa).

The disordered stretch occupies residues 1–24; the sequence is MPKKKTGARKKAENRREREKQLRA. The Nuclear localization signal signature appears at 3–11; it reads KKKTGARKK. A compositionally biased stretch (basic and acidic residues) spans 10–22; the sequence is KKAENRREREKQL. 4 C4-type zinc fingers span residues 42 to 58, 67 to 104, 129 to 149, and 175 to 189; these read CDKC…CYFC, CAQC…CDFC, CVEC…CSFC, and CVSC…CLRC. The segment at 227–299 is disordered; that stretch reads SMSTRSLKFG…ESSDLFNNLN (73 aa). Over residues 268–291 the composition is skewed to acidic residues; it reads DDDEEEDEAEDEEEEDGKDSDAES. Serine 287 bears the Phosphoserine mark.

The protein belongs to the NOA36 family.

Its subcellular location is the nucleus. The protein resides in the nucleolus. The protein localises to the chromosome. It is found in the centromere. This Mus musculus (Mouse) protein is Zinc finger protein 330 (Znf330).